A 113-amino-acid chain; its full sequence is Gas vesicle protein I2 (113 aa).

A disordered region spans residues 1–93; sequence MTPTNRHTHG…TVPEQPTHAT (93 aa). The span at 11–22 shows a compositional bias: low complexity; it reads QNAQHARRNAQQ. Over residues 52 to 63 the composition is skewed to polar residues; that stretch reads EQPTSDTTNPAA. The span at 69–81 shows a compositional bias: low complexity; sequence AQRTNAQNAARNA. Polar residues predominate over residues 82 to 93; that stretch reads HSTVPEQPTHAT.

The protein belongs to the gas vesicle GvpI family. GvpF to GvpM interact with each other in vitro, and may form multi-subunit complex(es). Interacts with GvpC and GvpO.

Its subcellular location is the gas vesicle. In terms of biological role, proteins GvpF to GvpM might be involved in nucleating gas vesicle formation. A minor component of the gas vesicle. Gas vesicles are hollow, gas filled proteinaceous nanostructures found in several microbial planktonic microorganisms. They allow positioning of halobacteria at the optimal depth for growth in the poorly aerated, shallow brine pools of their habitat. Functionally, expression of 2 c-vac DNA fragments containing 2 divergently transcribed regions (gvpE-gvpF-gvpG-gvpH-gvpI-gvpJ-gvpK-gvpL-gvpM and gvpA-gvpC-gvpN-gvpO) allows H.volcanii to produce gas vesicles. The protein is Gas vesicle protein I2 of Halobacterium salinarum (strain ATCC 700922 / JCM 11081 / NRC-1) (Halobacterium halobium).